The chain runs to 233 residues: Tapetum-specific methyltransferase 1 (233 aa).

Lysine 8 contributes to the substrate binding site. Residues valine 52, glutamate 74, 76–77, serine 82, aspartate 100, and alanine 129 contribute to the S-adenosyl-L-methionine site; that span reads GV. Aspartate 150 is a binding site for substrate. Residue aspartate 150 coordinates a divalent metal cation. Residue aspartate 152 participates in S-adenosyl-L-methionine binding. A divalent metal cation-binding residues include aspartate 176 and asparagine 177.

The protein belongs to the class I-like SAM-binding methyltransferase superfamily. Cation-dependent O-methyltransferase family. CCoAMT subfamily. Requires a divalent metal cation as cofactor. Expressed in inflorescences and flower buds. Not detected in roots, leaves or stems. Located exclusively in the tapetum of developing stamen.

Its pathway is aromatic compound metabolism; phenylpropanoid biosynthesis. Functionally, methyltransferase involved in phenylpropanoid polyamine conjugate biosynthesis. In vivo, methylates only one of the 5-hydroxyferuloyl moieties of N1,N5,N10-tri-(hydroxyferuloyl)-spermidine, while is able in vitro to convert all three 5-hydroxyferuloyl residues to the corresponding sinapoyl moieties and to methylate caffeoyl CoA and tricaffeoyl spermidine. In Arabidopsis thaliana (Mouse-ear cress), this protein is Tapetum-specific methyltransferase 1 (TSM1).